We begin with the raw amino-acid sequence, 376 residues long: UDP-N-acetylglucosamine--N-acetylmuramyl-(pentapeptide) pyrophosphoryl-undecaprenol N-acetylglucosamine transferase (376 aa).

Residues 11–13, asparagine 117, arginine 160, serine 208, and glutamine 310 each bind UDP-N-acetyl-alpha-D-glucosamine; that span reads TGG.

This sequence belongs to the glycosyltransferase 28 family. MurG subfamily.

It is found in the cell inner membrane. It catalyses the reaction di-trans,octa-cis-undecaprenyl diphospho-N-acetyl-alpha-D-muramoyl-L-alanyl-D-glutamyl-meso-2,6-diaminopimeloyl-D-alanyl-D-alanine + UDP-N-acetyl-alpha-D-glucosamine = di-trans,octa-cis-undecaprenyl diphospho-[N-acetyl-alpha-D-glucosaminyl-(1-&gt;4)]-N-acetyl-alpha-D-muramoyl-L-alanyl-D-glutamyl-meso-2,6-diaminopimeloyl-D-alanyl-D-alanine + UDP + H(+). The protein operates within cell wall biogenesis; peptidoglycan biosynthesis. Cell wall formation. Catalyzes the transfer of a GlcNAc subunit on undecaprenyl-pyrophosphoryl-MurNAc-pentapeptide (lipid intermediate I) to form undecaprenyl-pyrophosphoryl-MurNAc-(pentapeptide)GlcNAc (lipid intermediate II). The sequence is that of UDP-N-acetylglucosamine--N-acetylmuramyl-(pentapeptide) pyrophosphoryl-undecaprenol N-acetylglucosamine transferase from Rickettsia rickettsii (strain Iowa).